The following is a 125-amino-acid chain: Large ribosomal subunit protein bL17 (125 aa).

The protein belongs to the bacterial ribosomal protein bL17 family. Part of the 50S ribosomal subunit. Contacts protein L32.

The sequence is that of Large ribosomal subunit protein bL17 from Acinetobacter baumannii (strain AB307-0294).